A 232-amino-acid chain; its full sequence is Small ribosomal subunit protein uS2 (232 aa).

The protein belongs to the universal ribosomal protein uS2 family.

The polypeptide is Small ribosomal subunit protein uS2 (Alkaliphilus oremlandii (strain OhILAs) (Clostridium oremlandii (strain OhILAs))).